The chain runs to 73 residues: Aminopeptidase G (73 aa).

The segment at 39–73 is disordered; it reads GRRAASSSWPGRGSSRRWRPGRRTGAAARGCWRAP. Low complexity-rich tracts occupy residues 42 to 51 and 61 to 73; these read AASSSWPGRG and RTGA…WRAP.

The protein belongs to the peptidase M1 family. Zn(2+) serves as cofactor.

Its subcellular location is the cytoplasm. In terms of biological role, hydrolyzes preferentially the N-terminal glycine and can also hydrolyze other amino acids which are used by PepN but is unable to hydrolyze basic amino acids. This chain is Aminopeptidase G (pepG), found in Streptomyces lividans.